The chain runs to 212 residues: Ribosomal RNA large subunit methyltransferase E (212 aa).

S-adenosyl-L-methionine is bound by residues glycine 57, tryptophan 59, aspartate 77, aspartate 93, and aspartate 122. The active-site Proton acceptor is the lysine 162.

Belongs to the class I-like SAM-binding methyltransferase superfamily. RNA methyltransferase RlmE family.

The protein resides in the cytoplasm. The catalysed reaction is uridine(2552) in 23S rRNA + S-adenosyl-L-methionine = 2'-O-methyluridine(2552) in 23S rRNA + S-adenosyl-L-homocysteine + H(+). In terms of biological role, specifically methylates the uridine in position 2552 of 23S rRNA at the 2'-O position of the ribose in the fully assembled 50S ribosomal subunit. This chain is Ribosomal RNA large subunit methyltransferase E, found in Coxiella burnetii (strain CbuK_Q154) (Coxiella burnetii (strain Q154)).